The chain runs to 523 residues: GMP synthase [glutamine-hydrolyzing] (523 aa).

A Glutamine amidotransferase type-1 domain is found at 9–198 (PVLVVDFGAQ…LTEIAGLEQN (190 aa)). Residue cysteine 86 is the Nucleophile of the active site. Residues histidine 172 and glutamate 174 contribute to the active site. A GMPS ATP-PPase domain is found at 199 to 397 (WTAANIAEEL…LGLPEEIVGR (199 aa)). 227–233 (SGGVDSA) lines the ATP pocket.

Homodimer.

It carries out the reaction XMP + L-glutamine + ATP + H2O = GMP + L-glutamate + AMP + diphosphate + 2 H(+). Its pathway is purine metabolism; GMP biosynthesis; GMP from XMP (L-Gln route): step 1/1. Functionally, catalyzes the synthesis of GMP from XMP. This is GMP synthase [glutamine-hydrolyzing] from Corynebacterium glutamicum (strain ATCC 13032 / DSM 20300 / JCM 1318 / BCRC 11384 / CCUG 27702 / LMG 3730 / NBRC 12168 / NCIMB 10025 / NRRL B-2784 / 534).